Consider the following 118-residue polypeptide: Large ribosomal subunit protein uL18 (118 aa).

Belongs to the universal ribosomal protein uL18 family. As to quaternary structure, part of the 50S ribosomal subunit; part of the 5S rRNA/L5/L18/L25 subcomplex. Contacts the 5S and 23S rRNAs.

Functionally, this is one of the proteins that bind and probably mediate the attachment of the 5S RNA into the large ribosomal subunit, where it forms part of the central protuberance. The sequence is that of Large ribosomal subunit protein uL18 from Helicobacter pylori (strain J99 / ATCC 700824) (Campylobacter pylori J99).